A 160-amino-acid chain; its full sequence is Large ribosomal subunit protein uL22c (160 aa).

Belongs to the universal ribosomal protein uL22 family. In terms of assembly, part of the 50S ribosomal subunit.

Its subcellular location is the plastid. The protein localises to the chloroplast. In terms of biological role, this protein binds specifically to 23S rRNA. The globular domain of the protein is located near the polypeptide exit tunnel on the outside of the subunit, while an extended beta-hairpin is found that lines the wall of the exit tunnel in the center of the 70S ribosome. In Aethionema grandiflorum (Persian stone-cress), this protein is Large ribosomal subunit protein uL22c (rpl22).